The primary structure comprises 509 residues: Histidine ammonia-lyase (509 aa).

Residues 142–144 (ASG) constitute a cross-link (5-imidazolinone (Ala-Gly)). S143 is modified (2,3-didehydroalanine (Ser)).

It belongs to the PAL/histidase family. Post-translationally, contains an active site 4-methylidene-imidazol-5-one (MIO), which is formed autocatalytically by cyclization and dehydration of residues Ala-Ser-Gly.

The protein resides in the cytoplasm. The enzyme catalyses L-histidine = trans-urocanate + NH4(+). Its pathway is amino-acid degradation; L-histidine degradation into L-glutamate; N-formimidoyl-L-glutamate from L-histidine: step 1/3. The polypeptide is Histidine ammonia-lyase (Sphingopyxis alaskensis (strain DSM 13593 / LMG 18877 / RB2256) (Sphingomonas alaskensis)).